A 426-amino-acid polypeptide reads, in one-letter code: Glutamate-1-semialdehyde 2,1-aminomutase (426 aa).

The residue at position 265 (Lys-265) is an N6-(pyridoxal phosphate)lysine.

Belongs to the class-III pyridoxal-phosphate-dependent aminotransferase family. HemL subfamily. In terms of assembly, homodimer. Pyridoxal 5'-phosphate serves as cofactor.

The protein localises to the cytoplasm. The enzyme catalyses (S)-4-amino-5-oxopentanoate = 5-aminolevulinate. The protein operates within porphyrin-containing compound metabolism; protoporphyrin-IX biosynthesis; 5-aminolevulinate from L-glutamyl-tRNA(Glu): step 2/2. The chain is Glutamate-1-semialdehyde 2,1-aminomutase from Salmonella agona (strain SL483).